The sequence spans 77 residues: Delta/omega-plectoxin-Pt1a (77 aa).

Residues 1–20 form the signal peptide; the sequence is MKHLIVAVVLLSALAICTSA. The propeptide occupies 21 to 34; the sequence is EEEQVNVPFRPEER. 5 disulfide bridges follow: Cys38–Cys51, Cys45–Cys57, Cys50–Cys67, Cys54–Cys74, and Cys59–Cys65. Ser73 is lipidated: O-palmitoyl serine. Cys74 bears the Cysteine amide mark.

Belongs to the neurotoxin 02 (plectoxin) family. 01 (Tx3) subfamily. As to expression, expressed by the venom gland.

It is found in the secreted. Excitatory toxin that acts on both calcium and sodium (Nav) channels. It preferentially blocks a subset of calcium channels that is apparently not required for neurotransmitter release, it decreases threshold for sodium channel activation and it slows sodium channel inactivation. As it enhances synaptic transmission by prolonging presynaptic release of neurotransmitter, its effects on sodium and calcium channels may act synergistically to sustain the terminal excitability. The sequence is that of Delta/omega-plectoxin-Pt1a from Plectreurys tristis (Spider).